The following is a 315-amino-acid chain: Ribose-phosphate pyrophosphokinase (315 aa).

ATP contacts are provided by residues 37-39 and 96-97; these read DGE and RQ. 2 residues coordinate Mg(2+): histidine 131 and aspartate 170. Lysine 194 is a catalytic residue. Residues arginine 196, aspartate 220, and 224–228 contribute to the D-ribose 5-phosphate site; that span reads DTGGT.

The protein belongs to the ribose-phosphate pyrophosphokinase family. Class I subfamily. Homohexamer. Mg(2+) is required as a cofactor.

Its subcellular location is the cytoplasm. It carries out the reaction D-ribose 5-phosphate + ATP = 5-phospho-alpha-D-ribose 1-diphosphate + AMP + H(+). The protein operates within metabolic intermediate biosynthesis; 5-phospho-alpha-D-ribose 1-diphosphate biosynthesis; 5-phospho-alpha-D-ribose 1-diphosphate from D-ribose 5-phosphate (route I): step 1/1. Its function is as follows. Involved in the biosynthesis of the central metabolite phospho-alpha-D-ribosyl-1-pyrophosphate (PRPP) via the transfer of pyrophosphoryl group from ATP to 1-hydroxyl of ribose-5-phosphate (Rib-5-P). The chain is Ribose-phosphate pyrophosphokinase from Shewanella oneidensis (strain ATCC 700550 / JCM 31522 / CIP 106686 / LMG 19005 / NCIMB 14063 / MR-1).